We begin with the raw amino-acid sequence, 572 residues long: Proline--tRNA ligase (572 aa).

The protein belongs to the class-II aminoacyl-tRNA synthetase family. ProS type 1 subfamily. In terms of assembly, homodimer.

The protein resides in the cytoplasm. It carries out the reaction tRNA(Pro) + L-proline + ATP = L-prolyl-tRNA(Pro) + AMP + diphosphate. Functionally, catalyzes the attachment of proline to tRNA(Pro) in a two-step reaction: proline is first activated by ATP to form Pro-AMP and then transferred to the acceptor end of tRNA(Pro). As ProRS can inadvertently accommodate and process non-cognate amino acids such as alanine and cysteine, to avoid such errors it has two additional distinct editing activities against alanine. One activity is designated as 'pretransfer' editing and involves the tRNA(Pro)-independent hydrolysis of activated Ala-AMP. The other activity is designated 'posttransfer' editing and involves deacylation of mischarged Ala-tRNA(Pro). The misacylated Cys-tRNA(Pro) is not edited by ProRS. This Yersinia pestis (strain Pestoides F) protein is Proline--tRNA ligase.